The following is a 192-amino-acid chain: Inosine triphosphate pyrophosphatase (192 aa).

10-15 (TGNANK) provides a ligand contact to ITP. Glu43 lines the Mg(2+) pocket. Residues Lys56, 74–75 (DT), Lys91, 149–152 (FGWD), Lys173, and 178–179 (HR) contribute to the ITP site.

The protein belongs to the HAM1 NTPase family. Homodimer. Mg(2+) serves as cofactor. The cofactor is Mn(2+).

It is found in the cytoplasm. Its subcellular location is the nucleus. The enzyme catalyses ITP + H2O = IMP + diphosphate + H(+). The catalysed reaction is dITP + H2O = dIMP + diphosphate + H(+). It carries out the reaction XTP + H2O = XMP + diphosphate + H(+). Its function is as follows. Pyrophosphatase that hydrolyzes non-canonical purine nucleotides such as inosine triphosphate (ITP), deoxyinosine triphosphate (dITP) or xanthosine 5'-triphosphate (XTP) to their respective monophosphate derivatives. The enzyme does not distinguish between the deoxy- and ribose forms. Probably excludes non-canonical purines from RNA and DNA precursor pools, thus preventing their incorporation into RNA and DNA and avoiding chromosomal lesions. The protein is Inosine triphosphate pyrophosphatase of Candida glabrata (strain ATCC 2001 / BCRC 20586 / JCM 3761 / NBRC 0622 / NRRL Y-65 / CBS 138) (Yeast).